Here is a 330-residue protein sequence, read N- to C-terminus: Ribosomal RNA small subunit methyltransferase H (330 aa).

Residues 51–53 (GGH), aspartate 70, aspartate 118, and glutamine 125 contribute to the S-adenosyl-L-methionine site. The disordered stretch occupies residues 276 to 330 (STDSTPPGLPVPLPDRQPELRLLTRGAELPTEQETAANPRAASARLRAAERTREP). Low complexity predominate over residues 311-321 (AANPRAASARL).

The protein belongs to the methyltransferase superfamily. RsmH family.

Its subcellular location is the cytoplasm. It carries out the reaction cytidine(1402) in 16S rRNA + S-adenosyl-L-methionine = N(4)-methylcytidine(1402) in 16S rRNA + S-adenosyl-L-homocysteine + H(+). Functionally, specifically methylates the N4 position of cytidine in position 1402 (C1402) of 16S rRNA. This Thermobifida fusca (strain YX) protein is Ribosomal RNA small subunit methyltransferase H.